Consider the following 718-residue polypeptide: Auxin response factor 2 (718 aa).

Residues 1 to 24 (MVGIDLNTVEEEEDEEEGGATGTV) are disordered. Over residues 8 to 18 (TVEEEEDEEEG) the composition is skewed to acidic residues. The TF-B3 DNA-binding region spans 147-249 (FCKTLTASDT…ELRLGVRRAA (103 aa)).

This sequence belongs to the ARF family. As to quaternary structure, homo and heterodimers. As to expression, expressed in roots, culms, leaves and young panicles.

It is found in the nucleus. In terms of biological role, auxin response factors (ARFs) are transcriptional factors that bind specifically to the DNA sequence 5'-TGTCTC-3' found in the auxin-responsive promoter elements (AuxREs). The sequence is that of Auxin response factor 2 (ARF2) from Oryza sativa subsp. japonica (Rice).